A 320-amino-acid polypeptide reads, in one-letter code: 4-hydroxy-3-methylbut-2-enyl diphosphate reductase (320 aa).

Cysteine 12 is a binding site for [4Fe-4S] cluster. Positions 41 and 74 each coordinate (2E)-4-hydroxy-3-methylbut-2-enyl diphosphate. Histidine 41 and histidine 74 together coordinate dimethylallyl diphosphate. Histidine 41 and histidine 74 together coordinate isopentenyl diphosphate. Position 96 (cysteine 96) interacts with [4Fe-4S] cluster. Histidine 124 provides a ligand contact to (2E)-4-hydroxy-3-methylbut-2-enyl diphosphate. Histidine 124 provides a ligand contact to dimethylallyl diphosphate. Histidine 124 lines the isopentenyl diphosphate pocket. The active-site Proton donor is the glutamate 126. Residue threonine 167 coordinates (2E)-4-hydroxy-3-methylbut-2-enyl diphosphate. Cysteine 197 contacts [4Fe-4S] cluster. 4 residues coordinate (2E)-4-hydroxy-3-methylbut-2-enyl diphosphate: serine 225, serine 226, asparagine 227, and serine 269. Dimethylallyl diphosphate-binding residues include serine 225, serine 226, asparagine 227, and serine 269. Positions 225, 226, 227, and 269 each coordinate isopentenyl diphosphate.

Belongs to the IspH family. [4Fe-4S] cluster is required as a cofactor.

The enzyme catalyses isopentenyl diphosphate + 2 oxidized [2Fe-2S]-[ferredoxin] + H2O = (2E)-4-hydroxy-3-methylbut-2-enyl diphosphate + 2 reduced [2Fe-2S]-[ferredoxin] + 2 H(+). The catalysed reaction is dimethylallyl diphosphate + 2 oxidized [2Fe-2S]-[ferredoxin] + H2O = (2E)-4-hydroxy-3-methylbut-2-enyl diphosphate + 2 reduced [2Fe-2S]-[ferredoxin] + 2 H(+). It participates in isoprenoid biosynthesis; dimethylallyl diphosphate biosynthesis; dimethylallyl diphosphate from (2E)-4-hydroxy-3-methylbutenyl diphosphate: step 1/1. Its pathway is isoprenoid biosynthesis; isopentenyl diphosphate biosynthesis via DXP pathway; isopentenyl diphosphate from 1-deoxy-D-xylulose 5-phosphate: step 6/6. Catalyzes the conversion of 1-hydroxy-2-methyl-2-(E)-butenyl 4-diphosphate (HMBPP) into a mixture of isopentenyl diphosphate (IPP) and dimethylallyl diphosphate (DMAPP). Acts in the terminal step of the DOXP/MEP pathway for isoprenoid precursor biosynthesis. The polypeptide is 4-hydroxy-3-methylbut-2-enyl diphosphate reductase (Francisella tularensis subsp. novicida (strain U112)).